The sequence spans 582 residues: MHNDKDLSTWQTFRRLWPTIAPFKAGLIVAGVALILNAASDTFMLSLLKPLLDDGFGKTDRSVLVWMPLVVIGLMILRGITSYVSSYCISWVSGKVVMTMRRRLFGHMMGMPVSFFDKQSTGTLLSRITYDSEQVASSSSGALITVVREGASIIGLFIMMFYYSWQLSIILIVLAPIVSIAIRVVSKRFRNISKNMQNTMGQVTTSAEQMLKGHKEVLIFGGQEVETKRFDKVSNRMRLQGMKMVSASSISDPIIQLIASLALAFVLYAASFPSVMDNLTAGTITVVFSSMIALMRPLKSLTNVNAQFQRGMAACQTLFTILDSEQEKDEGKRVIERATGDVEFRNVTFTYPGRDVPALRNINLKIPAGKTVALVGRSGSGKSTIASLITRFYDIDEGEILMDGHDLREYTLASLRNQVALVSQNVHLFNDTVANNIAYARTEQYSREQIEEAARMAYAMDFINKMDNGLDTVIGENGVLLSGGQRQRIAIARALLRDSPILILDEATSALDTESERAIQAALDELQKNRTSLVIAHRLSTIEKADEIVVVEDGVIVERGTHNDLLEHRGVYAQLHKMQFGQ.

5 helical membrane-spanning segments follow: residues 16 to 36, 63 to 83, 153 to 173, 253 to 273, and 275 to 295; these read LWPTIAPFKAGLIVAGVALIL, VLVWMPLVVIGLMILRGITSY, IIGLFIMMFYYSWQLSIILIV, PIIQLIASLALAFVLYAASFP, and VMDNLTAGTITVVFSSMIALM. Positions 28-310 constitute an ABC transmembrane type-1 domain; it reads IVAGVALILN…LTNVNAQFQR (283 aa). The 237-residue stretch at 342 to 578 folds into the ABC transporter domain; sequence VEFRNVTFTY…RGVYAQLHKM (237 aa). 376-383 is an ATP binding site; sequence GRSGSGKS.

It belongs to the ABC transporter superfamily. Lipid exporter (TC 3.A.1.106) family. As to quaternary structure, homodimer.

The protein resides in the cell inner membrane. It carries out the reaction ATP + H2O + lipid A-core oligosaccharideSide 1 = ADP + phosphate + lipid A-core oligosaccharideSide 2.. Functionally, involved in lipopolysaccharide (LPS) biosynthesis. Translocates lipid A-core from the inner to the outer leaflet of the inner membrane. Transmembrane domains (TMD) form a pore in the inner membrane and the ATP-binding domain (NBD) is responsible for energy generation. The sequence is that of ATP-dependent lipid A-core flippase from Shigella flexneri.